Here is an 85-residue protein sequence, read N- to C-terminus: Small ribosomal subunit protein bS18A (85 aa).

The protein belongs to the bacterial ribosomal protein bS18 family. As to quaternary structure, part of the 30S ribosomal subunit. Forms a tight heterodimer with protein bS6.

In terms of biological role, binds as a heterodimer with protein bS6 to the central domain of the 16S rRNA, where it helps stabilize the platform of the 30S subunit. The chain is Small ribosomal subunit protein bS18A from Mycolicibacterium smegmatis (strain ATCC 700084 / mc(2)155) (Mycobacterium smegmatis).